Here is a 1157-residue protein sequence, read N- to C-terminus: ATP-dependent helicase/deoxyribonuclease subunit B (1157 aa).

One can recognise a UvrD-like helicase ATP-binding domain in the interval 1 to 277 (MTLQIIAGKA…KILLENKRAN (277 aa)). ATP is bound at residue 8-15 (GKAGTGKT). The 320-residue stretch at 271 to 590 (LENKRANSDS…VLADMENAKL (320 aa)) folds into the UvrD-like helicase C-terminal domain. The [4Fe-4S] cluster site is built by C794, C1115, C1118, and C1124.

It belongs to the helicase family. AddB/RexB type 1 subfamily. Heterodimer of AddA and AddB. Requires Mg(2+) as cofactor. The cofactor is [4Fe-4S] cluster.

In terms of biological role, the heterodimer acts as both an ATP-dependent DNA helicase and an ATP-dependent, dual-direction single-stranded exonuclease. Recognizes the chi site generating a DNA molecule suitable for the initiation of homologous recombination. The AddB subunit has 5' -&gt; 3' nuclease activity but not helicase activity. The polypeptide is ATP-dependent helicase/deoxyribonuclease subunit B (Listeria innocua serovar 6a (strain ATCC BAA-680 / CLIP 11262)).